The sequence spans 815 residues: Protein-glutamine gamma-glutamyltransferase K (815 aa).

Disordered regions lie at residues 1–40 and 59–100; these read MDGP…RRGG and DDWG…AAGD. A compositionally biased stretch (pro residues) spans 16–25; sequence WQPPTTPSPE. T21 carries the post-translational modification Phosphothreonine. A phosphoserine mark is found at S23, S80, S83, S90, and S93. The span at 59–87 shows a compositional bias: basic and acidic residues; the sequence is DDWGPEPHRDRGSGSGRRRPDSRGSDSRR. Residues C375, H434, and D457 contribute to the active site. Ca(2+) is bound by residues N497, D499, E546, and E551. A disordered region spans residues 795 to 815; it reads SNAGGNSPLGETIPMASRGGA.

This sequence belongs to the transglutaminase superfamily. Transglutaminase family. As to quaternary structure, interacts with PLAAT4. The cofactor is Ca(2+). Post-translationally, palmitoylated. In terms of processing, the membrane anchorage region possesses a cluster of five cysteines within which fatty acid(s) may become thioester-linked. It is subject to phorbol ester-stimulated phosphorylation and is hypersensitive to proteolysis, which releases the enzyme in a soluble form. Tyrosine-phosphorylated.

It is found in the membrane. The catalysed reaction is L-glutaminyl-[protein] + L-lysyl-[protein] = [protein]-L-lysyl-N(6)-5-L-glutamyl-[protein] + NH4(+). In terms of biological role, catalyzes the cross-linking of proteins and the conjugation of polyamines to proteins. Responsible for cross-linking epidermal proteins during formation of the stratum corneum. Involved in cell proliferation. This chain is Protein-glutamine gamma-glutamyltransferase K (TGM1), found in Canis lupus familiaris (Dog).